A 461-amino-acid polypeptide reads, in one-letter code: V-type ATP synthase beta chain (461 aa).

This sequence belongs to the ATPase alpha/beta chains family.

Functionally, produces ATP from ADP in the presence of a proton gradient across the membrane. The V-type beta chain is a regulatory subunit. The sequence is that of V-type ATP synthase beta chain from Streptococcus pneumoniae (strain CGSP14).